Here is a 355-residue protein sequence, read N- to C-terminus: N6-mAMP deaminase (355 aa).

Residues H13 and H15 each contribute to the Zn(2+) site. Residues H15, N17, H65, T97–K100, D160, and G190 each bind N(6)-methyl-AMP. Position 217 (H217) interacts with Zn(2+). Positions 220, 295, and 296 each coordinate N(6)-methyl-AMP. The active-site Proton donor is the E220. Residue D295 participates in Zn(2+) binding.

It belongs to the metallo-dependent hydrolases superfamily. Adenosine and AMP deaminases family. Monomer. Zn(2+) is required as a cofactor.

The protein resides in the cytoplasm. Its subcellular location is the cytosol. It catalyses the reaction N(6)-methyl-AMP + H2O + H(+) = IMP + methylamine. Functionally, catalyzes the hydrolysis of the free cytosolic methylated adenosine nucleotide N(6)-methyl-AMP (N6-mAMP) to produce inositol monophosphate (IMP) and methylamine. Is required for the catabolism of cytosolic N6-mAMP, which is derived from the degradation of mRNA containing N6-methylated adenine (m6A). Does not possess deaminase activity toward adenosine, AMP, N6-methyladenosine, or N6-mATP in vitro. This chain is N6-mAMP deaminase, found in Arabidopsis thaliana (Mouse-ear cress).